Reading from the N-terminus, the 293-residue chain is MTHDYIVKALAFDGEIRAYAALTTETVQEAQTRHYTWPTASAAMGRTMTATAMMGAMLKGDQKLTVTVDGQGPIGRIIADANAKGEVRAYVDHPQTHFPLNEQGKLDVRRAVGTNGSIIVVKDVGMKDYFSGASPIVSGELGEDFTYYYATSEQTPSSVGLGVLVNPDNTIKAAGGFIIQVMPGAKDETISKLEKAISEMTPVSKLIEQGLTPEGLLNEILGEDHVQILEKMPVQFECNCSHEKFLNAIKGLGEAEIQNMIKEDHGAEAVCHFCGNKYKYTEEELNVLLESLA.

2 disulfides stabilise this stretch: Cys238-Cys240 and Cys271-Cys274.

Belongs to the HSP33 family. Under oxidizing conditions two disulfide bonds are formed involving the reactive cysteines. Under reducing conditions zinc is bound to the reactive cysteines and the protein is inactive.

It is found in the cytoplasm. In terms of biological role, redox regulated molecular chaperone. Protects both thermally unfolding and oxidatively damaged proteins from irreversible aggregation. Plays an important role in the bacterial defense system toward oxidative stress. The protein is 33 kDa chaperonin of Staphylococcus aureus (strain Mu3 / ATCC 700698).